The following is a 658-amino-acid chain: DNA mismatch repair protein MutL (658 aa).

Residues 114-130 are compositionally biased toward basic and acidic residues; the sequence is RQEDSSHATQVKAEDGK. Disordered stretches follow at residues 114–137 and 369–391; these read RQEDSSHATQVKAEDGKLSSPTAA and DYPTGNKPDTRNAFGSSGKTAPM.

This sequence belongs to the DNA mismatch repair MutL/HexB family.

Its function is as follows. This protein is involved in the repair of mismatches in DNA. It is required for dam-dependent methyl-directed DNA mismatch repair. May act as a 'molecular matchmaker', a protein that promotes the formation of a stable complex between two or more DNA-binding proteins in an ATP-dependent manner without itself being part of a final effector complex. The protein is DNA mismatch repair protein MutL of Neisseria meningitidis serogroup C (strain 053442).